Consider the following 214-residue polypeptide: uncharacterized protein (214 aa).

The next 2 membrane-spanning stretches (helical) occupy residues 23–43 (ILVG…VAAA) and 65–85 (VLYA…PVLL). The segment at 96–115 (ATRPTGASVRGGRSIGSGHP) is disordered. 2 helical membrane-spanning segments follow: residues 152–172 (VVLT…TYLM) and 181–201 (WISY…EWLY).

It localises to the cell membrane. This is an uncharacterized protein from Mycobacterium tuberculosis (strain CDC 1551 / Oshkosh).